Reading from the N-terminus, the 622-residue chain is Protein FAM234B (622 aa).

Residues 1–68 form a disordered region; it reads MATVLSRALK…EPDSDAEVAE (68 aa). S16 carries the post-translational modification Phosphoserine. The residue at position 26 (T26) is a Phosphothreonine. S30, S33, and S62 each carry phosphoserine. The chain crosses the membrane as a helical span at residues 104-124; that stretch reads TSVFLLTLGISMILVLLCAFL.

Belongs to the FAM234 family.

The protein resides in the membrane. It is found in the golgi outpost. The protein localises to the cytoplasm. Its subcellular location is the cytoskeleton. It localises to the microtubule organizing center. The protein is Protein FAM234B of Homo sapiens (Human).